Here is a 382-residue protein sequence, read N- to C-terminus: S-adenosylmethionine synthase (382 aa).

His14 lines the ATP pocket. Asp16 contacts Mg(2+). Glu42 contributes to the K(+) binding site. 2 residues coordinate L-methionine: Glu55 and Gln91. Residues 91 to 101 (QSENIAMGVNL) form a flexible loop region. ATP-binding positions include 156–158 (DMK), 222–223 (KF), Asp231, 237–238 (RK), Ala254, and Lys258. Asp231 serves as a coordination point for L-methionine. Lys262 provides a ligand contact to L-methionine.

Belongs to the AdoMet synthase family. In terms of assembly, homotetramer; dimer of dimers. It depends on Mg(2+) as a cofactor. K(+) is required as a cofactor.

Its subcellular location is the cytoplasm. The catalysed reaction is L-methionine + ATP + H2O = S-adenosyl-L-methionine + phosphate + diphosphate. It functions in the pathway amino-acid biosynthesis; S-adenosyl-L-methionine biosynthesis; S-adenosyl-L-methionine from L-methionine: step 1/1. Its function is as follows. Catalyzes the formation of S-adenosylmethionine (AdoMet) from methionine and ATP. The overall synthetic reaction is composed of two sequential steps, AdoMet formation and the subsequent tripolyphosphate hydrolysis which occurs prior to release of AdoMet from the enzyme. This chain is S-adenosylmethionine synthase, found in Mycoplasmopsis synoviae (strain 53) (Mycoplasma synoviae).